We begin with the raw amino-acid sequence, 61 residues long: Small ribosomal subunit protein uS14 (61 aa).

Residues C24, C27, C40, and C43 each contribute to the Zn(2+) site.

Belongs to the universal ribosomal protein uS14 family. Zinc-binding uS14 subfamily. In terms of assembly, part of the 30S ribosomal subunit. Contacts proteins S3 and S10. The cofactor is Zn(2+).

Its function is as follows. Binds 16S rRNA, required for the assembly of 30S particles and may also be responsible for determining the conformation of the 16S rRNA at the A site. In Anaeromyxobacter sp. (strain Fw109-5), this protein is Small ribosomal subunit protein uS14.